A 348-amino-acid chain; its full sequence is tRNA pseudouridine synthase D (348 aa).

Substrate is bound at residue phenylalanine 27. The Nucleophile role is filled by aspartate 80. Substrate is bound at residue asparagine 129. The 149-residue stretch at glycine 155 to leucine 303 folds into the TRUD domain. A substrate-binding site is contributed by phenylalanine 329.

It belongs to the pseudouridine synthase TruD family.

It catalyses the reaction uridine(13) in tRNA = pseudouridine(13) in tRNA. Its function is as follows. Responsible for synthesis of pseudouridine from uracil-13 in transfer RNAs. The chain is tRNA pseudouridine synthase D from Pectobacterium carotovorum subsp. carotovorum (strain PC1).